Consider the following 859-residue polypeptide: Bifunctional heparan sulfate N-deacetylase/N-sulfotransferase 1 (859 aa).

Over 1 to 13 (MIITPYLNPRLVK) the chain is Cytoplasmic. Residues 14-34 (PLKWLAIIILLYFLYFSLFSI) traverse the membrane as a helical; Signal-anchor for type II membrane protein segment. Residues 34–575 (INKKPGKPRK…PRHQAILPPS (542 aa)) form a heparan sulfate N-deacetylase 1 region. Residues 35–859 (NKKPGKPRKP…WLEEAVRIRV (825 aa)) are Lumenal-facing. N-linked (GlcNAc...) asparagine glycosylation is found at N50, N74, N210, N262, N378, and N429. The tract at residues 576 to 859 (MSCSKKSLPD…WLEEAVRIRV (284 aa)) is heparan sulfate N-sulfotransferase 1. The active-site For sulfotransferase activity is the K593. 593–597 (KTGST) contacts 3'-phosphoadenylyl sulfate. N-linked (GlcNAc...) asparagine glycosylation is found at N608 and N643. A 3'-phosphoadenylyl sulfate-binding site is contributed by S687. N-linked (GlcNAc...) asparagine glycosylation occurs at N715. A disulfide bridge links C796 with C805. Residue 810-814 (KGRKY) participates in 3'-phosphoadenylyl sulfate binding.

This sequence belongs to the sulfotransferase 1 family. NDST subfamily. As to quaternary structure, monomer.

Its subcellular location is the golgi apparatus membrane. The enzyme catalyses alpha-D-glucosaminyl-[heparan sulfate](n) + 3'-phosphoadenylyl sulfate = N-sulfo-alpha-D-glucosaminyl-[heparan sulfate](n) + adenosine 3',5'-bisphosphate + 2 H(+). It participates in glycan metabolism; heparan sulfate biosynthesis. It functions in the pathway glycan metabolism; heparin biosynthesis. Essential bifunctional enzyme that catalyzes both the N-deacetylation and the N-sulfation of glucosamine (GlcNAc) of the glycosaminoglycan in heparan sulfate. Modifies the GlcNAc-GlcA disaccharide repeating sugar backbone to make N-sulfated heparosan, a prerequisite substrate for later modifications in heparin biosynthesis. In Caenorhabditis briggsae, this protein is Bifunctional heparan sulfate N-deacetylase/N-sulfotransferase 1 (hst-1).